Consider the following 118-residue polypeptide: MRANVLKRKLTLRIKRKKRIRAKISGCENFPRISVFKSNRTLYIQAIDDVKAVTLAAVDGRKLGVKANKEGAKKIAAEFAKTLKAKKIEQAVFDRNGYVYHGVIAALAESLRENGIRL.

Belongs to the universal ribosomal protein uL18 family. As to quaternary structure, part of the 50S ribosomal subunit; part of the 5S rRNA/L5/L18/L25 subcomplex. Contacts the 5S and 23S rRNAs.

In terms of biological role, this is one of the proteins that bind and probably mediate the attachment of the 5S RNA into the large ribosomal subunit, where it forms part of the central protuberance. The sequence is that of Large ribosomal subunit protein uL18 from Campylobacter jejuni subsp. jejuni serotype O:6 (strain 81116 / NCTC 11828).